Consider the following 98-residue polypeptide: NADH-ubiquinone oxidoreductase chain 4L (98 aa).

The next 3 membrane-spanning stretches (helical) occupy residues 1 to 21 (MSMVYINLFLAFIMSLMGLLV), 29 to 49 (SLLCLEGMMLSLFIMISITIL), and 61 to 81 (IILLVFAACEAALGLSLLVMV).

The protein belongs to the complex I subunit 4L family. In terms of assembly, core subunit of respiratory chain NADH dehydrogenase (Complex I) which is composed of 45 different subunits.

The protein localises to the mitochondrion inner membrane. It carries out the reaction a ubiquinone + NADH + 5 H(+)(in) = a ubiquinol + NAD(+) + 4 H(+)(out). Functionally, core subunit of the mitochondrial membrane respiratory chain NADH dehydrogenase (Complex I) which catalyzes electron transfer from NADH through the respiratory chain, using ubiquinone as an electron acceptor. Part of the enzyme membrane arm which is embedded in the lipid bilayer and involved in proton translocation. In Mephitis mephitis (Striped skunk), this protein is NADH-ubiquinone oxidoreductase chain 4L (MT-ND4L).